Here is a 695-residue protein sequence, read N- to C-terminus: UvrABC system protein B (695 aa).

In terms of domain architecture, Helicase ATP-binding spans 25-176; that stretch reads KSILEGHRFQ…NQREVLRDLA (152 aa). 38 to 45 serves as a coordination point for ATP; the sequence is GATGTGKT. The Beta-hairpin signature appears at 91 to 114; it reads YYDYYQPEAYVPSTDTYIAKSSSI. The Helicase C-terminal domain occupies 454–617; sequence LLGEIYLRLE…ITPKPIIKKN (164 aa). A UVR domain is found at 652 to 687; the sequence is PELIGQLELKMKAAAKNLEFEEAAQLRDQIKKLRQR.

Belongs to the UvrB family. In terms of assembly, forms a heterotetramer with UvrA during the search for lesions. Interacts with UvrC in an incision complex.

The protein resides in the cytoplasm. In terms of biological role, the UvrABC repair system catalyzes the recognition and processing of DNA lesions. A damage recognition complex composed of 2 UvrA and 2 UvrB subunits scans DNA for abnormalities. Upon binding of the UvrA(2)B(2) complex to a putative damaged site, the DNA wraps around one UvrB monomer. DNA wrap is dependent on ATP binding by UvrB and probably causes local melting of the DNA helix, facilitating insertion of UvrB beta-hairpin between the DNA strands. Then UvrB probes one DNA strand for the presence of a lesion. If a lesion is found the UvrA subunits dissociate and the UvrB-DNA preincision complex is formed. This complex is subsequently bound by UvrC and the second UvrB is released. If no lesion is found, the DNA wraps around the other UvrB subunit that will check the other stand for damage. In Synechococcus sp. (strain JA-3-3Ab) (Cyanobacteria bacterium Yellowstone A-Prime), this protein is UvrABC system protein B.